Reading from the N-terminus, the 547-residue chain is CTP synthase (547 aa).

The tract at residues 1-265 (MTKFVFVTGG…DRIVCEKLAL (265 aa)) is amidoligase domain. Ser13 provides a ligand contact to CTP. Residue Ser13 coordinates UTP. Residues 14-19 (SLGKGI) and Asp71 contribute to the ATP site. Residues Asp71 and Glu139 each contribute to the Mg(2+) site. CTP-binding positions include 146–148 (DIE), 186–191 (KTKPTQ), and Lys222. UTP is bound by residues 186-191 (KTKPTQ) and Lys222. In terms of domain architecture, Glutamine amidotransferase type-1 spans 290-542 (TIGMVGKYVD…IKAALAHKHA (253 aa)). Residue Gly351 participates in L-glutamine binding. The active-site Nucleophile; for glutamine hydrolysis is Cys378. L-glutamine-binding positions include 379 to 382 (LGMQ), Glu402, and Arg468. Catalysis depends on residues His515 and Glu517.

The protein belongs to the CTP synthase family. As to quaternary structure, homotetramer.

It catalyses the reaction UTP + L-glutamine + ATP + H2O = CTP + L-glutamate + ADP + phosphate + 2 H(+). It carries out the reaction L-glutamine + H2O = L-glutamate + NH4(+). The enzyme catalyses UTP + NH4(+) + ATP = CTP + ADP + phosphate + 2 H(+). It participates in pyrimidine metabolism; CTP biosynthesis via de novo pathway; CTP from UDP: step 2/2. Its activity is regulated as follows. Allosterically activated by GTP, when glutamine is the substrate; GTP has no effect on the reaction when ammonia is the substrate. The allosteric effector GTP functions by stabilizing the protein conformation that binds the tetrahedral intermediate(s) formed during glutamine hydrolysis. Inhibited by the product CTP, via allosteric rather than competitive inhibition. Its function is as follows. Catalyzes the ATP-dependent amination of UTP to CTP with either L-glutamine or ammonia as the source of nitrogen. Regulates intracellular CTP levels through interactions with the four ribonucleotide triphosphates. This Janthinobacterium sp. (strain Marseille) (Minibacterium massiliensis) protein is CTP synthase.